Here is a 534-residue protein sequence, read N- to C-terminus: MKVHNEAAVEAQITELRTITRLQEQCRALQIQGVKEKTAQNKATMGILRSNLRRGAQDWALAKKHDQWTISKACGKDTSMRLAHGRSTLEVAREKLRKYVFDRVNTHNILIHLVRRRGQKLESLQLELASLRNQPDATKDELRQLQIIRQLENNIEKTVIKITTSQNIHTLYKVLLDYLKKVLAEYPTELDKLQNLVANYCSELSDMTVMSQDAMMITDEVKRNMRQGEATFIEERRARENRLNQQKKLIDKIHTKETSEKYRRGRRDLDFPSNLMTMENVKVKKRKTSVADIQYQTKVTTLVERVKSAVQCSHLWDIAGRFLAQKNTEENLELQMEDCEERRTQLEALMKKLELEEAVLKFHQTPSAVGFNSIQKKMKNMLEEEEARLKQAQNNMNKGQQLLLVIQTGIDNLYIRLIGITLPTFQKEIAVSNTLDVYGKLDYCEGKLIYLAERMQTLSRNEEVDTKVRDTLESSTLKEKHNTRITFEDPEEDMIETFQFADVDHSYVPSRAEIKKQAQQLIEAKLKGAKKKKK.

3 coiled-coil regions span residues 10-54 (EAQI…NLRR), 136-209 (DATK…DMTV), and 321-406 (RFLA…LLVI).

The protein is Coiled-coil domain-containing protein 183 (Ccdc183) of Mus musculus (Mouse).